We begin with the raw amino-acid sequence, 570 residues long: Ribosome-inactivating protein SNAI (570 aa).

An N-terminal signal peptide occupies residues 1-28 (MRLVAKLLYLAVLAICGLGIHGALTHPR). N-linked (GlcNAc...) asparagine glycans are attached at residues asparagine 40, asparagine 62, and asparagine 144. Glutamate 199 is a catalytic residue. The N-linked (GlcNAc...) asparagine glycan is linked to asparagine 260. 3 disulfide bridges follow: cysteine 284/cysteine 316, cysteine 332/cysteine 351, and cysteine 373/cysteine 385. Ricin B-type lectin domains follow at residues 319 to 439 (VEVT…WTVG) and 441 to 566 (VEPL…WITT). The stretch at 329–369 (DGLCVDVRYGHYIDGNPVQLRPCGNECNQLWTFRTDGTIRW) is one 1-alpha repeat. One copy of the 1-beta repeat lies at 370–405 (LGKCLTASSSVMIYDCNTVPPEATKWVVSIDGTITN). A 1-gamma repeat occupies 408-440 (SGLVLTAPQAAEGTALSLENNIHAARQGWTVGD). A 2-alpha repeat occupies 452 to 489 (KQMCLRENGENNFVWLEDCVLNRVQQEWALYGDGTIRV). Cysteine 455 and cysteine 470 are disulfide-bonded. Asparagine 492 carries N-linked (GlcNAc...) asparagine glycosylation. The 2-beta repeat unit spans residues 493–531 (RSLCVTSEDHEPSDLIVILKCEGSGNQRWVFNTNGTISN). Cysteine 496 and cysteine 513 are disulfide-bonded. A glycan (N-linked (GlcNAc...) asparagine) is linked at asparagine 526. A 2-gamma repeat occupies 534–567 (AKLLMDVAQRDVSLRKIILYRPTGNPNQQWITTT).

Belongs to the ribosome-inactivating protein family. Type 2 RIP subfamily. Tetramer of four pairs of disulfide bound A-B chains. In terms of processing, the precursor is processed in two chains, A and B, that are linked by a disulfide bond. A small truncated form corresponding roughly to the second ricin B-type lectin domain of the B chain, TrSNAI, can also be produced. Glycosylated. N-glycans of subunit A are (Man)2-3(Xyl)(GlcNAc)2(Fuc) at Asn-40, (GlcNAc)0-2(Man)3(Xyl)(GlcNAc)2(Fuc) or (Man)1-2(GlcNAc)2 at Asn-62, (Man)3(Xyl)(GlcNAc)2(Fuc)0-1 at Asn-144 and (GlcNAc)0-1(Man)3(Xyl)(GlcNAc)2(Fuc) at Asn-260. N-glycans of subunit B are (Man)3(Xyl)(GlcNAc)2(Fuc) at Asn-492 and (Man)6-9(GlcNAc)2 at Asn-526. As to expression, expressed in bark.

The enzyme catalyses Endohydrolysis of the N-glycosidic bond at one specific adenosine on the 28S rRNA.. In terms of biological role, neu5Ac(alpha2-6)Gal/GalNAc specific agglutinin. Behaves as a type-2 ribosome-inactivating protein. Strongly inhibits mammalian but not plant ribosomes. The A chain is responsible for inhibiting protein synthesis through the catalytic inactivation of 60S ribosomal subunits by removing adenine from position 4,324 of 28S rRNA. The B chain binds to cell receptors and probably facilitates the entry into the cell of the A chain; B chains are also responsible for cell agglutination (lectin activity). Involved in plant defense against insects. Binds Neu5Ac(alpha2-6)Gal/GalNAc but has no clear agglutination activity. This is Ribosome-inactivating protein SNAI from Sambucus nigra (European elder).